We begin with the raw amino-acid sequence, 349 residues long: Ribosomal RNA small subunit methyltransferase C (349 aa).

Belongs to the methyltransferase superfamily. RsmC family. As to quaternary structure, monomer.

The protein resides in the cytoplasm. It carries out the reaction guanosine(1207) in 16S rRNA + S-adenosyl-L-methionine = N(2)-methylguanosine(1207) in 16S rRNA + S-adenosyl-L-homocysteine + H(+). In terms of biological role, specifically methylates the guanine in position 1207 of 16S rRNA in the 30S particle. The polypeptide is Ribosomal RNA small subunit methyltransferase C (Psychromonas ingrahamii (strain DSM 17664 / CCUG 51855 / 37)).